A 581-amino-acid polypeptide reads, in one-letter code: MCEQKYRWTKKQIRQQLAVVRGEMAPTLVLKNATYLNSVRGKWLDANIWIYQDRIVYVGQDMPAKLDDETEVVDCGQQVIVPGYIEHHAHPFQLYNPHSFANYAAAMGTTTLINDNLMFFLALEKKKALSMIESLDELPSSMYWWCRYDPQTEMNDEEGHFLNSKIKEWLEHPLVVQGGELTSWPKVITGDDGILHWMQETRRLRKPIEGHFPGASEKTLTQMSLLGVTSDHEAMTGEEVIRRLDLGYMTSLRHSSIRSDLAKILREMKELGIDDFSRCMLTTDGSPPSFYEQGIMDRLIKIALDEGIPPKDAYGMATYYVARYYGLDYELGMIAPGRIAHLNFLDNVFNPVPTSVLAKGQWVVRDGQRYGSDSVFPWEDFGMKRLTIDWDLSVDELHFSMPMGIELVNSVILKPYQVSVEASRDTLAEDHDECFFLLLDKHGKWKIPTMIKGFAKKVSGLASSFSTTGDIILIGKCIQDMIVAFNALKQQGGGIVLVENGEVISNIPLEIMGLLSSKPMEEVMEEEKKFVKALRERGYEHDDPIYSLLFFSSTHLPYIRVTQRGIYDVHKKTVLFPSIMR.

The protein belongs to the metallo-dependent hydrolases superfamily. Adenine deaminase family.

It catalyses the reaction adenine + H2O + H(+) = hypoxanthine + NH4(+). This is Putative adenine deaminase BH0637 from Halalkalibacterium halodurans (strain ATCC BAA-125 / DSM 18197 / FERM 7344 / JCM 9153 / C-125) (Bacillus halodurans).